Here is a 193-residue protein sequence, read N- to C-terminus: Thioredoxin reductase-like selenoprotein T1b (193 aa).

The N-terminal stretch at 1-21 (METRCLYLLLVCVLSVNHATA) is a signal peptide. The cysteinyl-selenocysteine (Cys-Sec) cross-link spans 44 to 47 (CVSU). A non-standard amino acid (selenocysteine) is located at residue Sec47.

Belongs to the SelWTH family. Selenoprotein T subfamily. May contain a selenide-sulfide bond between Cys-44 and Sec-47. This bond is speculated to serve as redox-active pair. Widely expressed in the embryo. High level in embryonic blood at 24 hours post-fertilization (hpf).

The protein localises to the endoplasmic reticulum membrane. The catalysed reaction is [thioredoxin]-dithiol + NADP(+) = [thioredoxin]-disulfide + NADPH + H(+). In terms of biological role, selenoprotein with thioredoxin reductase-like oxidoreductase activity. This Danio rerio (Zebrafish) protein is Thioredoxin reductase-like selenoprotein T1b.